The chain runs to 338 residues: Glyceraldehyde-3-phosphate dehydrogenase (338 aa).

Residues 12-13 (RI), aspartate 38, and serine 125 contribute to the NAD(+) site. Residues 155-157 (SCT), threonine 186, 216-217 (TG), and arginine 239 each bind D-glyceraldehyde 3-phosphate. Catalysis depends on cysteine 156, which acts as the Nucleophile. Residue asparagine 320 participates in NAD(+) binding.

It belongs to the glyceraldehyde-3-phosphate dehydrogenase family. Homotetramer.

It localises to the cytoplasm. It carries out the reaction D-glyceraldehyde 3-phosphate + phosphate + NAD(+) = (2R)-3-phospho-glyceroyl phosphate + NADH + H(+). The protein operates within carbohydrate degradation; glycolysis; pyruvate from D-glyceraldehyde 3-phosphate: step 1/5. In terms of biological role, catalyzes the oxidative phosphorylation of glyceraldehyde 3-phosphate (G3P) to 1,3-bisphosphoglycerate (BPG) using the cofactor NAD. The first reaction step involves the formation of a hemiacetal intermediate between G3P and a cysteine residue, and this hemiacetal intermediate is then oxidized to a thioester, with concomitant reduction of NAD to NADH. The reduced NADH is then exchanged with the second NAD, and the thioester is attacked by a nucleophilic inorganic phosphate to produce BPG. The chain is Glyceraldehyde-3-phosphate dehydrogenase (gap) from Lactobacillus delbrueckii subsp. bulgaricus.